The primary structure comprises 158 residues: 2-C-methyl-D-erythritol 2,4-cyclodiphosphate synthase (158 aa).

Residues D8 and H10 each contribute to the a divalent metal cation site. 4-CDP-2-C-methyl-D-erythritol 2-phosphate-binding positions include 8 to 10 and 34 to 35; these read DVH and HS. H42 contacts a divalent metal cation. 4-CDP-2-C-methyl-D-erythritol 2-phosphate is bound by residues 56–58, 61–65, 100–106, 132–135, F139, and R142; these read DIG, FPDTD, AQVPKMA, and TTTE.

It belongs to the IspF family. As to quaternary structure, homotrimer. Requires a divalent metal cation as cofactor.

The catalysed reaction is 4-CDP-2-C-methyl-D-erythritol 2-phosphate = 2-C-methyl-D-erythritol 2,4-cyclic diphosphate + CMP. The protein operates within isoprenoid biosynthesis; isopentenyl diphosphate biosynthesis via DXP pathway; isopentenyl diphosphate from 1-deoxy-D-xylulose 5-phosphate: step 4/6. Involved in the biosynthesis of isopentenyl diphosphate (IPP) and dimethylallyl diphosphate (DMAPP), two major building blocks of isoprenoid compounds. Catalyzes the conversion of 4-diphosphocytidyl-2-C-methyl-D-erythritol 2-phosphate (CDP-ME2P) to 2-C-methyl-D-erythritol 2,4-cyclodiphosphate (ME-CPP) with a corresponding release of cytidine 5-monophosphate (CMP). In Sodalis glossinidius (strain morsitans), this protein is 2-C-methyl-D-erythritol 2,4-cyclodiphosphate synthase.